A 234-amino-acid chain; its full sequence is MAPVKVVLLDIEGTVCPISFVKDVLFPYALEALPGTLKAKWDSPGFASYRAAFPAEHAGSQETLAAHVRDLMSKDLKISYLKSLQGYLWETGYRNGELKAPLFADVAPQLARWREHNGAKVMIYSSGSVPAQKLLFGHTNGEPSDILPWLSDFFDTVNAGPKQEKASYEKIAAKHQEYPIGEWLFLSDNVKEVEAAKQAGMQSYIVDRPGNAELSEEARKEHRVVKSFEEIGDL.

Mg(2+) is bound by residues Asp-10 and Glu-12. Substrate is bound by residues Ser-125 to Ser-126 and Lys-162. Asp-188 serves as a coordination point for Mg(2+).

This sequence belongs to the HAD-like hydrolase superfamily. MasA/MtnC family. In terms of assembly, monomer. It depends on Mg(2+) as a cofactor.

It is found in the cytoplasm. The protein localises to the nucleus. The catalysed reaction is 5-methylsulfanyl-2,3-dioxopentyl phosphate + H2O = 1,2-dihydroxy-5-(methylsulfanyl)pent-1-en-3-one + phosphate. Its pathway is amino-acid biosynthesis; L-methionine biosynthesis via salvage pathway; L-methionine from S-methyl-5-thio-alpha-D-ribose 1-phosphate: step 3/6. It participates in amino-acid biosynthesis; L-methionine biosynthesis via salvage pathway; L-methionine from S-methyl-5-thio-alpha-D-ribose 1-phosphate: step 4/6. In terms of biological role, bifunctional enzyme that catalyzes the enolization of 2,3-diketo-5-methylthiopentyl-1-phosphate (DK-MTP-1-P) into the intermediate 2-hydroxy-3-keto-5-methylthiopentenyl-1-phosphate (HK-MTPenyl-1-P), which is then dephosphorylated to form the acireductone 1,2-dihydroxy-3-keto-5-methylthiopentene (DHK-MTPene). This Sordaria macrospora (strain ATCC MYA-333 / DSM 997 / K(L3346) / K-hell) protein is Enolase-phosphatase E1.